The chain runs to 422 residues: Serine protease inhibitor A3A (422 aa).

A signal peptide spans 1–17; it reads MAFIAALGLLMVGICPA. Asn-218, Asn-230, and Asn-271 each carry an N-linked (GlcNAc...) asparagine glycan. Residues 369–394 form an RCL region; the sequence is HTEADVITIARYNFQSAKIKAKIVKV.

Belongs to the serpin family.

It localises to the secreted. The chain is Serine protease inhibitor A3A (Serpina3a) from Mus musculus (Mouse).